The following is a 119-amino-acid chain: UPF0102 protein MS1289 (119 aa).

The protein belongs to the UPF0102 family.

This is UPF0102 protein MS1289 from Mannheimia succiniciproducens (strain KCTC 0769BP / MBEL55E).